The chain runs to 149 residues: MSTNNCTFKDRCVSILCCKFCKQVLSSRGMKAVLLADTDIDLYSTDIPPTNTVDFIGRCYFTGIHKCKLKDIACLKCGNIVGYHVIVPCSSCLLSCNNGHFWMFHSQAVYGINRLDSTGVNFLLWGNLPETEECTDEEMLEISAEEYIR.

Belongs to the FAM72 family. In terms of assembly, interacts with UNG. Expressed at high levels in stomach and also in kidney and, at low levels, in heart (at protein level). In the stomach, highly expressed in foveolar cells, parietal cells and chief cells (at protein level). In kidney, expressed in endothelial cells, mesangial and epithelial cells (parietal and visceral epithelium) around glomerulus (at protein level).

Its subcellular location is the cytoplasm. The protein resides in the mitochondrion. Functionally, may play a role in the regulation of cellular reactive oxygen species metabolism. May participate in cell growth regulation. In Rattus norvegicus (Rat), this protein is Protein FAM72A (Fam72a).